The primary structure comprises 212 residues: Imidazole glycerol phosphate synthase subunit HisH 2 (212 aa).

The Glutamine amidotransferase type-1 domain occupies 3–212 (RVAIIDYGIN…LMSNFLQWNP (210 aa)). The active-site Nucleophile is the cysteine 82. Residues histidine 192 and glutamate 194 contribute to the active site.

As to quaternary structure, heterodimer of HisH and HisF.

Its subcellular location is the cytoplasm. It catalyses the reaction 5-[(5-phospho-1-deoxy-D-ribulos-1-ylimino)methylamino]-1-(5-phospho-beta-D-ribosyl)imidazole-4-carboxamide + L-glutamine = D-erythro-1-(imidazol-4-yl)glycerol 3-phosphate + 5-amino-1-(5-phospho-beta-D-ribosyl)imidazole-4-carboxamide + L-glutamate + H(+). It carries out the reaction L-glutamine + H2O = L-glutamate + NH4(+). It functions in the pathway amino-acid biosynthesis; L-histidine biosynthesis; L-histidine from 5-phospho-alpha-D-ribose 1-diphosphate: step 5/9. In terms of biological role, IGPS catalyzes the conversion of PRFAR and glutamine to IGP, AICAR and glutamate. The HisH subunit provides the glutamine amidotransferase activity that produces the ammonia necessary to HisF for the synthesis of IGP and AICAR. The chain is Imidazole glycerol phosphate synthase subunit HisH 2 from Nitrobacter winogradskyi (strain ATCC 25391 / DSM 10237 / CIP 104748 / NCIMB 11846 / Nb-255).